Consider the following 835-residue polypeptide: Replication origin-binding protein (835 aa).

In terms of domain architecture, Helicase ATP-binding spans 54–215; the sequence is PGMSQTRPVT…SGLRGDENIH (162 aa). 67 to 74 serves as a coordination point for ATP; the sequence is APMGSGKT.

Belongs to the herpesviridae OriBP family. As to quaternary structure, homodimer. Interacts with the major DNA-binding protein. Interacts with the helicase/primase component 52 and the polymerase accessory protein.

It localises to the host nucleus. Its function is as follows. Functions as a docking protein to recruit essential components of the viral replication machinery to viral DNA origins. In the presence of the major DNA-binding protein, opens dsDNA leading to a conformational change in the origin that facilitates DNA unwinding and subsequent replication. The protein is Replication origin-binding protein of Homo sapiens (Human).